A 100-amino-acid polypeptide reads, in one-letter code: uncharacterized protein (100 aa).

This is an uncharacterized protein from Mycoplasma pneumoniae (strain ATCC 29342 / M129 / Subtype 1) (Mycoplasmoides pneumoniae).